Consider the following 443-residue polypeptide: C4-dicarboxylate transport protein (443 aa).

A run of 9 helical transmembrane segments spans residues 17 to 37 (PFYS…ILLG), 57 to 77 (LVKM…IAGM), 92 to 112 (LYFL…ANVV), 139 to 159 (EQSI…GAFA), 161 to 181 (GDIL…AMVG), 201 to 221 (LVAI…AFTI), 234 to 254 (MLIG…LGAV), 320 to 340 (IYMT…LSWG), and 368 to 388 (AATL…ILGI).

The protein belongs to the dicarboxylate/amino acid:cation symporter (DAACS) (TC 2.A.23) family.

It is found in the cell inner membrane. In terms of biological role, responsible for the transport of dicarboxylates such as succinate, fumarate, and malate from the periplasm across the membrane. The chain is C4-dicarboxylate transport protein from Rhizobium leguminosarum bv. trifolii (strain WSM2304).